We begin with the raw amino-acid sequence, 526 residues long: Importin subunit alpha-1a (526 aa).

The IBB domain maps to 1–58 (MSLRPSERVEVRRNRYKVAVDAEEGRRRREDNMVEIRKSRREESLLKKRREGLQAQAP). 8 ARM repeats span residues 105–145 (SPPI…NIAS), 148–187 (SENT…NVAG), 190–230 (PKCR…NFCR), 232–271 (KPQP…YLSD), 274–313 (NDKI…NIVT), 316–356 (DAQT…NITA), 359–398 (KDQI…NATS), and 402–441 (HDQI…NILK).

This sequence belongs to the importin alpha family. In terms of assembly, forms a complex with importin subunit beta-1. The whole complex, most stable and composed of importin alpha, importin beta and NLS substrate, is referred to as PTAC or pore targeting complex. Interacts with mungbean yellow mosaic virus capsid protein. In terms of tissue distribution, highly expressed in callus, followed by root and etiolated leaf. Low expression in green leaf.

The protein resides in the cytoplasm. The protein localises to the perinuclear region. Functionally, functions in nuclear protein import. Binds specifically and directly to substrates containing either a simple or bipartite NLS motif. Promotes docking of import substrates to the nuclear envelope. In Oryza sativa subsp. japonica (Rice), this protein is Importin subunit alpha-1a.